The primary structure comprises 467 residues: Asparagine--tRNA ligase (467 aa).

Belongs to the class-II aminoacyl-tRNA synthetase family. Homodimer.

It is found in the cytoplasm. It carries out the reaction tRNA(Asn) + L-asparagine + ATP = L-asparaginyl-tRNA(Asn) + AMP + diphosphate + H(+). The polypeptide is Asparagine--tRNA ligase (Legionella pneumophila (strain Corby)).